The chain runs to 326 residues: 5-dehydro-2-deoxygluconokinase (326 aa).

The protein belongs to the carbohydrate kinase PfkB family.

The enzyme catalyses 5-dehydro-2-deoxy-D-gluconate + ATP = 6-phospho-5-dehydro-2-deoxy-D-gluconate + ADP + H(+). The protein operates within polyol metabolism; myo-inositol degradation into acetyl-CoA; acetyl-CoA from myo-inositol: step 5/7. Its function is as follows. Catalyzes the phosphorylation of 5-dehydro-2-deoxy-D-gluconate (2-deoxy-5-keto-D-gluconate or DKG) to 6-phospho-5-dehydro-2-deoxy-D-gluconate (DKGP). In Lacticaseibacillus casei (Lactobacillus casei), this protein is 5-dehydro-2-deoxygluconokinase.